The chain runs to 346 residues: Magnesium-protoporphyrin IX monomethyl ester [oxidative] cyclase (346 aa).

This sequence belongs to the AcsF family. It depends on Fe cation as a cofactor.

It carries out the reaction Mg-protoporphyrin IX 13-monomethyl ester + 3 NADPH + 3 O2 + 2 H(+) = 3,8-divinyl protochlorophyllide a + 3 NADP(+) + 5 H2O. It participates in porphyrin-containing compound metabolism; chlorophyll biosynthesis (light-independent). In terms of biological role, catalyzes the formation of the isocyclic ring in chlorophyll biosynthesis. Mediates the cyclase reaction, which results in the formation of divinylprotochlorophyllide (Pchlide) characteristic of all chlorophylls from magnesium-protoporphyrin IX 13-monomethyl ester (MgPMME). In Gloeobacter violaceus (strain ATCC 29082 / PCC 7421), this protein is Magnesium-protoporphyrin IX monomethyl ester [oxidative] cyclase.